A 922-amino-acid polypeptide reads, in one-letter code: Cell surface glycoprotein 2 (922 aa).

Residues 1 to 23 form the signal peptide; the sequence is MTGNSDKVRSLFLTALMVFSVFA. N-linked (GlcNAc...) asparagine glycosylation is found at N37, N56, N110, N220, N251, N262, and N292. The N-linked (GalNAc...) asparagine glycan is linked to N307. N-linked (GlcNAc...) asparagine glycans are attached at residues N319, N344, N396, N437, N490, N523, N557, N574, N587, N616, N700, N717, N809, N838, and N847. Residues 816–899 form a disordered region; the sequence is PHQDTNGNEE…GTETTEAEGP (84 aa). Over residues 835-850 the composition is skewed to polar residues; sequence YTQNGSAVTDSANVTV. The span at 853–887 shows a compositional bias: acidic residues; that stretch reads EEPEDTPEDTPEDTPEDTPEDTPEDTPADTPEDTP. Residues 888-899 are compositionally biased toward low complexity; the sequence is DTGTETTEAEGP. Residues 898–918 form a helical membrane-spanning segment; it reads GPGFTAAIALIALVAAALLAV. The PGF sorting signal signature appears at 899-901; sequence PGF.

The protein belongs to the halobacterial S-layer protein family. N-glycosylated on Asn-307; this N-linked glycan is a branched trisaccharide containing 2-amino-6-sulfo-2,6-dideoxy-glucose (sulfoquinovosamine). In terms of processing, O-glycosylated on Thr residues within the DTPE repeats in the C-terminal region; glycans consist of Glc-Gal disaccharides. Post-translationally, cleaved by the archaeosortase ArtA at the C-terminus, with removal of a short hydrophobic segment. Lipidation.

Its subcellular location is the secreted. It localises to the cell wall. The protein localises to the S-layer. It is found in the cell membrane. Its function is as follows. S-layer protein. The S-layer is a paracrystalline mono-layered assembly of proteins which coat the surface of the cell. In H.hispanica, the S-layer contains two different glycoproteins, Slg1 and Slg2, which share highly similar amino acid sequences. This Haloarcula hispanica (strain ATCC 33960 / DSM 4426 / JCM 8911 / NBRC 102182 / NCIMB 2187 / VKM B-1755) protein is Cell surface glycoprotein 2.